The primary structure comprises 89 residues: MKEMIIWPAYIDIKRTKNEGRKVPKEFAVANPKLKDIADKIKKMGLEHSIEIKKSYPMEPWEICGYIKVKLDKNTSKLQILKEISKNMK.

Belongs to the SRP19 family. In terms of assembly, part of the signal recognition particle protein translocation system, which is composed of SRP and FtsY. Archaeal SRP consists of a 7S RNA molecule of 300 nucleotides and two protein subunits: SRP54 and SRP19.

It is found in the cytoplasm. In terms of biological role, involved in targeting and insertion of nascent membrane proteins into the cytoplasmic membrane. Binds directly to 7S RNA and mediates binding of the 54 kDa subunit of the SRP. The polypeptide is Signal recognition particle 19 kDa protein (Methanococcus maripaludis (strain C7 / ATCC BAA-1331)).